Here is a 170-residue protein sequence, read N- to C-terminus: Protein SprT (170 aa).

Residues 22-163 (LQQANLTLQT…RCRRCGKTLR (142 aa)) enclose the SprT-like domain. H78 serves as a coordination point for Zn(2+). E79 is a catalytic residue. H82 is a Zn(2+) binding site.

The protein belongs to the SprT family. Zn(2+) serves as cofactor.

The protein resides in the cytoplasm. This Pectobacterium carotovorum subsp. carotovorum (strain PC1) protein is Protein SprT.